The sequence spans 688 residues: Glycine--tRNA ligase beta subunit (688 aa).

The protein belongs to the class-II aminoacyl-tRNA synthetase family. In terms of assembly, tetramer of two alpha and two beta subunits.

It localises to the cytoplasm. It carries out the reaction tRNA(Gly) + glycine + ATP = glycyl-tRNA(Gly) + AMP + diphosphate. The chain is Glycine--tRNA ligase beta subunit from Aliivibrio fischeri (strain ATCC 700601 / ES114) (Vibrio fischeri).